A 55-amino-acid chain; its full sequence is MAKSQDVRPVIKLRSTGGTGYTYVTRKNRRNDPDRMVVRKYDPVLRRHVDFREER.

Belongs to the bacterial ribosomal protein bL33 family.

The sequence is that of Large ribosomal subunit protein bL33B from Kineococcus radiotolerans (strain ATCC BAA-149 / DSM 14245 / SRS30216).